Reading from the N-terminus, the 208-residue chain is ATP-dependent Clp protease proteolytic subunit (208 aa).

Ser105 acts as the Nucleophile in catalysis. Residue His130 is part of the active site.

Belongs to the peptidase S14 family. As to quaternary structure, fourteen ClpP subunits assemble into 2 heptameric rings which stack back to back to give a disk-like structure with a central cavity, resembling the structure of eukaryotic proteasomes.

The protein resides in the cytoplasm. It catalyses the reaction Hydrolysis of proteins to small peptides in the presence of ATP and magnesium. alpha-casein is the usual test substrate. In the absence of ATP, only oligopeptides shorter than five residues are hydrolyzed (such as succinyl-Leu-Tyr-|-NHMec, and Leu-Tyr-Leu-|-Tyr-Trp, in which cleavage of the -Tyr-|-Leu- and -Tyr-|-Trp bonds also occurs).. Its function is as follows. Cleaves peptides in various proteins in a process that requires ATP hydrolysis. Has a chymotrypsin-like activity. Plays a major role in the degradation of misfolded proteins. The sequence is that of ATP-dependent Clp protease proteolytic subunit from Xylella fastidiosa (strain M12).